The sequence spans 29 residues: MDIVGIAWAALMVVFTFSLSLVVWGRSGL.

The helical transmembrane segment at 3 to 23 threads the bilayer; sequence IVGIAWAALMVVFTFSLSLVV.

It belongs to the PetN family. The 4 large subunits of the cytochrome b6-f complex are cytochrome b6, subunit IV (17 kDa polypeptide, PetD), cytochrome f and the Rieske protein, while the 4 small subunits are PetG, PetL, PetM and PetN. The complex functions as a dimer.

It localises to the plastid. It is found in the chloroplast thylakoid membrane. Component of the cytochrome b6-f complex, which mediates electron transfer between photosystem II (PSII) and photosystem I (PSI), cyclic electron flow around PSI, and state transitions. This chain is Cytochrome b6-f complex subunit 8, found in Cryptomeria japonica (Japanese cedar).